The primary structure comprises 520 residues: MATKLLALSLSFCFLLLGGCFALREQPEQNECQLERLNALEPDNRIESEGGLIETWNPNNKQFRCAGVALSRATLQHNALRRPYYSNAPQEIFIQQGNGYFGMVFPGCPETFEEPQESEQGEGRRYRDRHQKVNRFREGDIIAVPTGIVFWMYNDQDTPVIAVSLTDIRSSNNQLDQMPRRFYLAGNHEQEFLRYQHQQGGKQEQENEGNNIFSGFKRDFLEDAFNVNRHIVDRLQGRNEDEEKGAIVKVKGGLSIISPPEKQARHQRGSRQEEDEDEDEERQPRHQRGSRQEEEEDEDEERQPRHQRRRGEEEEEDKKERRGSQKGKSRRQGDNGLEETVCTAKLRLNIGPSSSPDIYNPEAGRIKTVTSLDLPVLRWLKLSAEHGSLHKNAMFVPHYNLNANSIIYALKGRARLQVVNCNGNTVFDGELEAGRALTVPQNYAVAAKSLSDRFSYVAFKTNDRAGIARLAGTSSVINNLPLDVVAATFNLQRNEARQLKSNNPFKFLVPARQSENRASA.

Residues 1–22 form the signal peptide; it reads MATKLLALSLSFCFLLLGGCFA. 2 disulfide bridges follow: cysteine 32-cysteine 65 and cysteine 108-cysteine 342. The region spanning 37-233 is the Cupin type-1 1 domain; the sequence is LNALEPDNRI…AFNVNRHIVD (197 aa). The disordered stretch occupies residues 250 to 339; that stretch reads VKGGLSIISP…RRQGDNGLEE (90 aa). Residues 348-497 enclose the Cupin type-1 2 domain; that stretch reads LNIGPSSSPD…TFNLQRNEAR (150 aa).

Belongs to the 11S seed storage protein (globulins) family. As to quaternary structure, hexamer; each subunit is composed of an acidic and a basic chain derived from a single precursor and linked by a disulfide bond.

Functionally, this protein found in the seeds of many leguminous and non-leguminous plants is the source of sulfur-containing amino acids in seed meals. The sequence is that of Legumin A2 (LEGA2) from Pisum sativum (Garden pea).